Here is a 585-residue protein sequence, read N- to C-terminus: YTH domain-containing family protein 3 (585 aa).

3 disordered regions span residues 1-51, 244-277, and 304-350; these read MSAT…SYPP, KPAK…MNIG, and PQPL…QPQL. The residue at position 2 (serine 2) is an N-acetylserine. Residues 15–24 are compositionally biased toward polar residues; it reads NKVSVQNGSI. A Phosphoserine modification is found at serine 23. Residues 244 to 254 show a composition bias toward basic residues; the sequence is KPAKPQPKLKP. The span at 329 to 350 shows a compositional bias: low complexity; it reads QQQQGPQPQAQPHQVQSQQPQL. The region spanning 416 to 550 is the YTH domain; that stretch reads GRVFIIKSYS…EKAKQVLKII (135 aa). RNA-binding positions include 422 to 424, aspartate 428, 438 to 439, asparagine 468, tryptophan 492, and tryptophan 497; these read KSY and WC.

This sequence belongs to the YTHDF family. YTHDF3 subfamily. In terms of assembly, interacts with CNOT1; promoting recruitment of the CCR4-NOT complex. Interacts with YTHDF1. Interacts with YTHDF2. Interacts with PAN3.

Its subcellular location is the cytoplasm. The protein localises to the cytosol. The protein resides in the P-body. It localises to the stress granule. Functionally, specifically recognizes and binds N6-methyladenosine (m6A)-containing RNAs, and regulates their stability. M6A is a modification present at internal sites of mRNAs and some non-coding RNAs and plays a role in mRNA stability and processing. Acts as a regulator of mRNA stability by promoting degradation of m6A-containing mRNAs via interaction with the CCR4-NOT complex or PAN3. The YTHDF paralogs (YTHDF1, YTHDF2 and YTHDF3) share m6A-containing mRNAs targets and act redundantly to mediate mRNA degradation and cellular differentiation. Acts as a negative regulator of type I interferon response by down-regulating interferon-stimulated genes (ISGs) expression: acts by binding to FOXO3 mRNAs. Binds to FOXO3 mRNAs independently of METTL3-mediated m6A modification. Can also act as a regulator of mRNA stability in cooperation with YTHDF2 by binding to m6A-containing mRNA and promoting their degradation. Recognizes and binds m6A-containing circular RNAs (circRNAs); circRNAs are generated through back-splicing of pre-mRNAs, a non-canonical splicing process promoted by dsRNA structures across circularizing exons. Promotes formation of phase-separated membraneless compartments, such as P-bodies or stress granules, by undergoing liquid-liquid phase separation upon binding to mRNAs containing multiple m6A-modified residues: polymethylated mRNAs act as a multivalent scaffold for the binding of YTHDF proteins, juxtaposing their disordered regions and thereby leading to phase separation. The resulting mRNA-YTHDF complexes then partition into different endogenous phase-separated membraneless compartments, such as P-bodies, stress granules or neuronal RNA granules. May also recognize and bind N1-methyladenosine (m1A)-containing mRNAs: inhibits trophoblast invasion by binding to m1A-methylated transcripts of IGF1R, promoting their degradation. This chain is YTH domain-containing family protein 3, found in Mus musculus (Mouse).